The following is a 1134-amino-acid chain: Phytochrome 1 (1134 aa).

Residues 219–401 (DIGLLCDTVV…VFGLQLNMEA (183 aa)) enclose the GAF domain. Cys-324 lines the phytochromobilin pocket. The region spanning 616-687 (VANEMVRLIE…RLLYLALQGD (72 aa)) is the PAS 1 domain. In terms of domain architecture, PAC spans 690–746 (QNVELKLKTFGGQKDKEAVILVVNACASRDVSDNVVGVCFVGQDVTGQKVVMDKFTR). Residues 750–821 (DYKAIVQNPN…KGQDAVTKFM (72 aa)) enclose the PAS 2 domain. One can recognise a Histidine kinase domain in the interval 901–1121 (YIRQEIKNPL…LVSLELPLAQ (221 aa)).

The protein belongs to the phytochrome family. Homodimer. In terms of processing, contains one covalently linked phytochromobilin chromophore.

Its function is as follows. Regulatory photoreceptor which exists in two forms that are reversibly interconvertible by light: the Pr form that absorbs maximally in the red region of the spectrum and the Pfr form that absorbs maximally in the far-red region. Photoconversion of Pr to Pfr induces an array of morphogenic responses, whereas reconversion of Pfr to Pr cancels the induction of those responses. Pfr controls the expression of a number of nuclear genes including those encoding the small subunit of ribulose-bisphosphate carboxylase, chlorophyll A/B binding protein, protochlorophyllide reductase, rRNA, etc. It also controls the expression of its own gene(s) in a negative feedback fashion. The chain is Phytochrome 1 (PHY1) from Selaginella martensii (Martens's spike moss).